The sequence spans 209 residues: Orotate phosphoribosyltransferase (209 aa).

5-phospho-alpha-D-ribose 1-diphosphate-binding positions include Arg-96, Lys-100, His-102, and 122–130 (EDLISTGGS). Position 126 (Ser-126) interacts with orotate.

The protein belongs to the purine/pyrimidine phosphoribosyltransferase family. PyrE subfamily. In terms of assembly, homodimer. Mg(2+) is required as a cofactor.

It catalyses the reaction orotidine 5'-phosphate + diphosphate = orotate + 5-phospho-alpha-D-ribose 1-diphosphate. It participates in pyrimidine metabolism; UMP biosynthesis via de novo pathway; UMP from orotate: step 1/2. Its function is as follows. Catalyzes the transfer of a ribosyl phosphate group from 5-phosphoribose 1-diphosphate to orotate, leading to the formation of orotidine monophosphate (OMP). The chain is Orotate phosphoribosyltransferase from Streptococcus pyogenes serotype M12 (strain MGAS2096).